The primary structure comprises 204 residues: LexA repressor (204 aa).

A DNA-binding region (H-T-H motif) is located at residues 29 to 49; the sequence is VREIGDAVGLMSSSTVHGHLQ. Active-site for autocatalytic cleavage activity residues include Ser-127 and Lys-164.

It belongs to the peptidase S24 family. As to quaternary structure, homodimer.

The enzyme catalyses Hydrolysis of Ala-|-Gly bond in repressor LexA.. Represses a number of genes involved in the response to DNA damage (SOS response), including recA and lexA. In the presence of single-stranded DNA, RecA interacts with LexA causing an autocatalytic cleavage which disrupts the DNA-binding part of LexA, leading to derepression of the SOS regulon and eventually DNA repair. This Desulfitobacterium hafniense (strain DSM 10664 / DCB-2) protein is LexA repressor.